Consider the following 606-residue polypeptide: 4-hydroxy-3-methylbut-2-en-1-yl diphosphate synthase (flavodoxin) (606 aa).

Residues C513, C516, C547, and E554 each coordinate [4Fe-4S] cluster.

It belongs to the IspG family. Requires [4Fe-4S] cluster as cofactor.

The catalysed reaction is (2E)-4-hydroxy-3-methylbut-2-enyl diphosphate + oxidized [flavodoxin] + H2O + 2 H(+) = 2-C-methyl-D-erythritol 2,4-cyclic diphosphate + reduced [flavodoxin]. It functions in the pathway isoprenoid biosynthesis; isopentenyl diphosphate biosynthesis via DXP pathway; isopentenyl diphosphate from 1-deoxy-D-xylulose 5-phosphate: step 5/6. Converts 2C-methyl-D-erythritol 2,4-cyclodiphosphate (ME-2,4cPP) into 1-hydroxy-2-methyl-2-(E)-butenyl 4-diphosphate. In Chlamydia caviae (strain ATCC VR-813 / DSM 19441 / 03DC25 / GPIC) (Chlamydophila caviae), this protein is 4-hydroxy-3-methylbut-2-en-1-yl diphosphate synthase (flavodoxin).